A 256-amino-acid chain; its full sequence is MALPDFSMRQLLEAGVHFGHQTHRWNPKMAPFIYGERNNIHILDLSQTVPLLNSALKVVSDTVARGGRVLFVGTKRQASDIIADAANRSAQYYVNARWLGGMMTNWKTISNSIQRLRKLDELLAGEAQGFTKKERLNLEREREKLDRALGGIKDMGSVPDLMFIIDTNKEAIAIQEAKRLGIPVVAVIDSNCDPDQIDYPIPGNDDAARAIALYCDLIARAALDGIARQQGAMGIDVGAQVEAPVEPALQAPAEGA.

Belongs to the universal ribosomal protein uS2 family.

The sequence is that of Small ribosomal subunit protein uS2 from Brucella abortus (strain S19).